The chain runs to 1589 residues: Mediator of RNA polymerase II transcription subunit 23 (1589 aa).

Positions 1381–1499 (YVSQNEPAPP…PPTPAPMHHQ (119 aa)) are disordered. Over residues 1392–1410 (TPEREKTPERKDQQKEQQE) the composition is skewed to basic and acidic residues. Over residues 1457–1470 (LHHQQQQQQHLSQM) the composition is skewed to low complexity.

It belongs to the Mediator complex subunit 23 family. As to quaternary structure, component of the Mediator complex.

The protein resides in the nucleus. Its function is as follows. Component of the Mediator complex, a coactivator involved in the regulated transcription of nearly all RNA polymerase II-dependent genes. Mediator functions as a bridge to convey information from gene-specific regulatory proteins to the basal RNA polymerase II transcription machinery. Mediator is recruited to promoters by direct interactions with regulatory proteins and serves as a scaffold for the assembly of a functional preinitiation complex with RNA polymerase II and the general transcription factors. The protein is Mediator of RNA polymerase II transcription subunit 23 (sur-2) of Caenorhabditis briggsae.